Consider the following 239-residue polypeptide: Uridylate kinase (239 aa).

10–13 (KFSG) contacts ATP. Residues 18 to 23 (GENGFG) are involved in allosteric activation by GTP. Glycine 52 contributes to the UMP binding site. ATP contacts are provided by glycine 53 and arginine 57. UMP-binding positions include aspartate 73 and 134 to 141 (TGNPYFTT). Threonine 161, tyrosine 167, and aspartate 170 together coordinate ATP.

Belongs to the UMP kinase family. As to quaternary structure, homohexamer.

The protein localises to the cytoplasm. It catalyses the reaction UMP + ATP = UDP + ADP. It participates in pyrimidine metabolism; CTP biosynthesis via de novo pathway; UDP from UMP (UMPK route): step 1/1. Its activity is regulated as follows. Allosterically activated by GTP. Inhibited by UTP. Catalyzes the reversible phosphorylation of UMP to UDP. The polypeptide is Uridylate kinase (Campylobacter jejuni subsp. jejuni serotype O:6 (strain 81116 / NCTC 11828)).